A 699-amino-acid polypeptide reads, in one-letter code: Probable xyloglucan glycosyltransferase 12 (699 aa).

A run of 2 helical transmembrane segments spans residues 126 to 146 and 194 to 214; these read CLKV…AAYF and IVLF…CFWI. The active site involves D280. The substrate site is built by D339 and D341. D433 is an active-site residue. 2 helical membrane passes run 511–531 and 536–556; these read LILP…TMFV and LPAW…ILPA. The segment at 616–646 is disordered; that stretch reads EKTTKHQRGVSAPETEAEKKAEKTKRKKKKH. Residues K617 and K620 each participate in a glycyl lysine isopeptide (Lys-Gly) (interchain with G-Cter in ubiquitin) cross-link. Phosphoserine is present on S626. Positions 637 to 646 are enriched in basic residues; that stretch reads EKTKRKKKKH. 2 helical membrane passes run 649–668 and 674–694; these read IYMK…TRSL and IHFY…LDLI.

It belongs to the glycosyltransferase 2 family. Plant cellulose synthase-like C subfamily. Homodimer. Mainly expressed in roots, flowers and seeds, and, at very low levels, in seedlings, leaves and stems.

The protein localises to the golgi apparatus membrane. Its function is as follows. Probable beta-1,4-glucan synthase rather involved in the synthesis of the xyloglucan backbone than cellulose. Seems to work simultaneously with xyloglucan 6-xylosyltransferase. Xyloglucan is a noncellulosic polysaccharides of plant cell wall and consists of a glucan backbone substituted by xylose, galactose and fucose. This Arabidopsis thaliana (Mouse-ear cress) protein is Probable xyloglucan glycosyltransferase 12.